The chain runs to 754 residues: 5-methyltetrahydropteroyltriglutamate--homocysteine methyltransferase (754 aa).

Residues 17-20 and Lys-117 contribute to the 5-methyltetrahydropteroyltri-L-glutamate site; that span reads RELK. Residues 431 to 433 and Glu-484 each bind L-homocysteine; that span reads IGS. Residues 431–433 and Glu-484 each bind L-methionine; that span reads IGS. 5-methyltetrahydropteroyltri-L-glutamate-binding positions include 515-516 and Trp-561; that span reads RC. Asp-599 contacts L-homocysteine. Asp-599 is a binding site for L-methionine. Glu-605 lines the 5-methyltetrahydropteroyltri-L-glutamate pocket. Positions 641, 643, and 665 each coordinate Zn(2+). Catalysis depends on His-694, which acts as the Proton donor. Cys-726 lines the Zn(2+) pocket.

The protein belongs to the vitamin-B12 independent methionine synthase family. It depends on Zn(2+) as a cofactor.

The enzyme catalyses 5-methyltetrahydropteroyltri-L-glutamate + L-homocysteine = tetrahydropteroyltri-L-glutamate + L-methionine. It participates in amino-acid biosynthesis; L-methionine biosynthesis via de novo pathway; L-methionine from L-homocysteine (MetE route): step 1/1. Functionally, catalyzes the transfer of a methyl group from 5-methyltetrahydrofolate to homocysteine resulting in methionine formation. The sequence is that of 5-methyltetrahydropteroyltriglutamate--homocysteine methyltransferase from Salmonella paratyphi A (strain ATCC 9150 / SARB42).